A 241-amino-acid chain; its full sequence is MKIDIVPTPGRLLKRYKRFLADIQLPDGAELTIHCPNTGAMTGCAEPGSLVYYSDSGNPARKYRHTWELVETPAGEFACVNTARPNQLVGEAVDAGVIKELQGYPLKKAEVKFGDQNSRADWMLSGSSELPDCYVEVKNVTLCLHGRGYFPDAVSTRGQKHLEELMSVVRNGKRAALVFCVNHSGISVVSPATHIDARYGALLSEAIEAGVEVLAYKSEITPGEIRLTQKLEVTPFDSEAF.

Belongs to the SfsA family.

This is Sugar fermentation stimulation protein homolog from Hahella chejuensis (strain KCTC 2396).